The chain runs to 360 residues: Heme A synthase (360 aa).

The next 8 helical transmembrane spans lie at 29-49 (WLFL…ATRL), 111-131 (FLGR…WWTG), 139-159 (LGLV…WIMV), 175-195 (LAAH…LAAG), 210-230 (LTAL…GLVA), 269-289 (VALV…LALL), 309-329 (ALAG…LLAV), and 330-350 (PLWA…MAVA). Residue His276 participates in heme binding. His337 is a heme binding site.

The protein belongs to the COX15/CtaA family. Type 2 subfamily. Interacts with CtaB. Heme b serves as cofactor.

The protein localises to the cell membrane. The catalysed reaction is Fe(II)-heme o + 2 A + H2O = Fe(II)-heme a + 2 AH2. The protein operates within porphyrin-containing compound metabolism; heme A biosynthesis; heme A from heme O: step 1/1. Functionally, catalyzes the conversion of heme O to heme A by two successive hydroxylations of the methyl group at C8. The first hydroxylation forms heme I, the second hydroxylation results in an unstable dihydroxymethyl group, which spontaneously dehydrates, resulting in the formyl group of heme A. This is Heme A synthase from Methylobacterium sp. (strain 4-46).